The sequence spans 307 residues: Ribonuclease Z (307 aa).

Residues His63, His65, Asp67, His68, His140, Asp211, and His269 each coordinate Zn(2+). The active-site Proton acceptor is the Asp67.

It belongs to the RNase Z family. As to quaternary structure, homodimer. Zn(2+) is required as a cofactor.

It carries out the reaction Endonucleolytic cleavage of RNA, removing extra 3' nucleotides from tRNA precursor, generating 3' termini of tRNAs. A 3'-hydroxy group is left at the tRNA terminus and a 5'-phosphoryl group is left at the trailer molecule.. Functionally, zinc phosphodiesterase, which displays some tRNA 3'-processing endonuclease activity. Probably involved in tRNA maturation, by removing a 3'-trailer from precursor tRNA. The sequence is that of Ribonuclease Z from Bacillus subtilis (strain 168).